A 368-amino-acid polypeptide reads, in one-letter code: Agmatine deiminase (368 aa).

The Amidino-cysteine intermediate role is filled by C357.

Belongs to the agmatine deiminase family. Homodimer.

The catalysed reaction is agmatine + H2O = N-carbamoylputrescine + NH4(+). The protein operates within amine and polyamine biosynthesis; putrescine biosynthesis via agmatine pathway; N-carbamoylputrescine from agmatine: step 1/1. Mediates the hydrolysis of agmatine into N-carbamoylputrescine in the arginine decarboxylase (ADC) pathway of putrescine biosynthesis, a basic polyamine. This is Agmatine deiminase from Pseudomonas fluorescens (strain ATCC BAA-477 / NRRL B-23932 / Pf-5).